The following is a 220-amino-acid chain: Claudin-22 (220 aa).

Over 1–10 (MGLVFRTATQ) the chain is Cytoplasmic. A helical transmembrane segment spans residues 11–31 (AAALLLSLLGWVLSCLTNYLP). At 32–81 (HWKNLNLELNEMENWTMGLWKSCVIQEEVGRQCKDFDSFLALPAELQVSR) the chain is on the extracellular side. A helical membrane pass occupies residues 82–102 (VLMSLCNGLGLLGLLASGCGL). Residues 103-120 (DCLRLGETQEGLKKRLLT) lie on the Cytoplasmic side of the membrane. A helical transmembrane segment spans residues 121–141 (LGGTLLWTSGVMVLVPVSWVA). Over 142-164 (HKTVREFWDETMPEIVPRWEFGE) the chain is Extracellular. The helical transmembrane segment at 165–185 (ALFLGWFAGFCLVLGGCVLHC) threads the bilayer. Residues 186–220 (AACWSPAPAASSHYAVAGPRDHQQHLELKQANPEI) lie on the Cytoplasmic side of the membrane.

This sequence belongs to the claudin family.

The protein localises to the cell junction. It localises to the tight junction. It is found in the cell membrane. Functionally, plays a major role in tight junction-specific obliteration of the intercellular space, through calcium-independent cell-adhesion activity. The protein is Claudin-22 (Cldn22) of Mus musculus (Mouse).